The sequence spans 307 residues: 2-phospho-L-lactate transferase (307 aa).

Positions 48 and 87 each coordinate 7,8-didemethyl-8-hydroxy-5-deazariboflavin.

It belongs to the CofD family. Homodimer. Requires Mg(2+) as cofactor.

It catalyses the reaction (2S)-lactyl-2-diphospho-5'-guanosine + 7,8-didemethyl-8-hydroxy-5-deazariboflavin = oxidized coenzyme F420-0 + GMP + H(+). Its pathway is cofactor biosynthesis; coenzyme F420 biosynthesis. Catalyzes the transfer of the 2-phospholactate moiety from (2S)-lactyl-2-diphospho-5'-guanosine to 7,8-didemethyl-8-hydroxy-5-deazariboflavin (FO) with the formation of oxidized coenzyme F420-0 and GMP. The chain is 2-phospho-L-lactate transferase from Methanosarcina acetivorans (strain ATCC 35395 / DSM 2834 / JCM 12185 / C2A).